A 375-amino-acid chain; its full sequence is Enoyl-[acyl-carrier-protein] reductase, mitochondrial (375 aa).

The N-terminal 37 residues, 1–37 (MAALMESVVGRALKFSSTANFRSIRRGETPTLCIKSF), are a transit peptide targeting the mitochondrion. Residue Tyr-96 is the Proton donor of the active site. Residues Asn-169, 195-198 (TSIV), 218-220 (RDR), 287-290 (YGGM), 312-314 (FWL), and Lys-370 each bind NADP(+).

It belongs to the zinc-containing alcohol dehydrogenase family. Quinone oxidoreductase subfamily. In terms of assembly, homodimer.

It localises to the mitochondrion. It carries out the reaction a 2,3-saturated acyl-[ACP] + NADP(+) = a (2E)-enoyl-[ACP] + NADPH + H(+). Catalyzes the NADPH-dependent reduction of trans-2-enoyl thioesters in mitochondrial fatty acid synthesis (fatty acid synthesis type II). Fatty acid chain elongation in mitochondria uses acyl carrier protein (ACP) as an acyl group carrier, but the enzyme accepts both ACP and CoA thioesters as substrates in vitro. The polypeptide is Enoyl-[acyl-carrier-protein] reductase, mitochondrial (Arabidopsis thaliana (Mouse-ear cress)).